The following is a 156-amino-acid chain: Small ribosomal subunit protein uS7c (156 aa).

It belongs to the universal ribosomal protein uS7 family. In terms of assembly, part of the 30S ribosomal subunit.

The protein resides in the plastid. Its subcellular location is the chloroplast. One of the primary rRNA binding proteins, it binds directly to 16S rRNA where it nucleates assembly of the head domain of the 30S subunit. This chain is Small ribosomal subunit protein uS7c (rps7), found in Pisum sativum (Garden pea).